Here is a 349-residue protein sequence, read N- to C-terminus: UPF0284 protein MA_3887 (349 aa).

The protein belongs to the UPF0284 family.

In Methanosarcina acetivorans (strain ATCC 35395 / DSM 2834 / JCM 12185 / C2A), this protein is UPF0284 protein MA_3887.